A 323-amino-acid polypeptide reads, in one-letter code: Calcium homeostasis modulator protein 2 (323 aa).

Residues 1–21 (MAALIAENFRFLSLFFKSKDV) lie on the Cytoplasmic side of the membrane. The segment at 14–39 (LFFKSKDVMIFNGLVALGTVGSQELF) is central pore. A helical membrane pass occupies residues 22-43 (MIFNGLVALGTVGSQELFSVVA). Residues 44-52 (FHCPCSPAR) are Extracellular-facing. Cystine bridges form between cysteine 46–cysteine 130 and cysteine 48–cysteine 162. The chain crosses the membrane as a helical span at residues 53 to 76 (NYLYGLTAIGVPALALFLIGVILN). At 77 to 101 (NHTWNLVAECQYRRAKNCSAAPTFL) the chain is on the cytoplasmic side. A helical membrane pass occupies residues 102-132 (LLSSILGRAAVAPVTWSVISLLRGEAYVCAL). Over 133-179 (SEFVDPSSLTAGDEGFPPDHATEILARFPCGEGPANLSGFREEVSRR) the chain is Extracellular. Residues 145–152 (DEGFPPDH) are hemichannel docking. A helical membrane pass occupies residues 180 to 206 (LKYESQLFGWLLIGVVAILVFLTKCFK). Residues 207–323 (HYCSPLSYRQ…DNVEMALLTV (117 aa)) are Cytoplasmic-facing. The segment at 214 to 251 (YRQEAYWAQYRTNEDQLFQRTAEVHSRVLAANNVRRFF) is intersubunit interaction.

The protein belongs to the CALHM family. In terms of assembly, homo-undecamer. Two undecameric hemichannels can assemble in a head-to-head manner to form a gap junction.

The protein localises to the cell membrane. It carries out the reaction ATP(in) = ATP(out). In terms of biological role, pore-forming subunit of Ca(2+) homeostasis modulator channels. Mediates ATP release from astrocytes and ATP-induced Ca(2+) influx in microglia thus regulating neuronal ATP and Ca(2+) homeostasis, synaptic transmission and neuroinflammatory response. May form intercellular gap junctions. The gating mechanism remains unknown. In Rattus norvegicus (Rat), this protein is Calcium homeostasis modulator protein 2 (Calhm2).